The following is a 114-amino-acid chain: T cell receptor beta variable 6-4 (114 aa).

The first 21 residues, 1-21 (MSIRLLCCVAFSLLWAGPVTA), serve as a signal peptide directing secretion. The 93-residue stretch at 22-114 (GITQAPTSQI…TSVYFCASSD (93 aa)) folds into the Ig-like domain. Cys42 and Cys110 form a disulfide bridge.

As to quaternary structure, alpha-beta TR is a heterodimer composed of an alpha and beta chain; disulfide-linked. The alpha-beta TR is associated with the transmembrane signaling CD3 coreceptor proteins to form the TR-CD3 (TcR or TCR). The assembly of alpha-beta TR heterodimers with CD3 occurs in the endoplasmic reticulum where a single alpha-beta TR heterodimer associates with one CD3D-CD3E heterodimer, one CD3G-CD3E heterodimer and one CD247 homodimer forming a stable octameric structure. CD3D-CD3E and CD3G-CD3E heterodimers preferentially associate with TR alpha and TR beta chains, respectively. The association of the CD247 homodimer is the last step of TcR assembly in the endoplasmic reticulum and is required for transport to the cell surface.

It localises to the cell membrane. Functionally, v region of the variable domain of T cell receptor (TR) beta chain that participates in the antigen recognition. Alpha-beta T cell receptors are antigen specific receptors which are essential to the immune response and are present on the cell surface of T lymphocytes. Recognize peptide-major histocompatibility (MH) (pMH) complexes that are displayed by antigen presenting cells (APC), a prerequisite for efficient T cell adaptive immunity against pathogens. Binding of alpha-beta TR to pMH complex initiates TR-CD3 clustering on the cell surface and intracellular activation of LCK that phosphorylates the ITAM motifs of CD3G, CD3D, CD3E and CD247 enabling the recruitment of ZAP70. In turn ZAP70 phosphorylates LAT, which recruits numerous signaling molecules to form the LAT signalosome. The LAT signalosome propagates signal branching to three major signaling pathways, the calcium, the mitogen-activated protein kinase (MAPK) kinase and the nuclear factor NF-kappa-B (NF-kB) pathways, leading to the mobilization of transcription factors that are critical for gene expression and essential for T cell growth and differentiation. The T cell repertoire is generated in the thymus, by V-(D)-J rearrangement. This repertoire is then shaped by intrathymic selection events to generate a peripheral T cell pool of self-MH restricted, non-autoaggressive T cells. Post-thymic interaction of alpha-beta TR with the pMH complexes shapes TR structural and functional avidity. The protein is T cell receptor beta variable 6-4 of Homo sapiens (Human).